Reading from the N-terminus, the 79-residue chain is Acyl carrier protein (79 aa).

The 76-residue stretch at 1 to 76 folds into the Carrier domain; it reads MSLEDDVIAI…DVFTYIKKRQ (76 aa). The residue at position 36 (serine 36) is an O-(pantetheine 4'-phosphoryl)serine.

It belongs to the acyl carrier protein (ACP) family. 4'-phosphopantetheine is transferred from CoA to a specific serine of apo-ACP by AcpS. This modification is essential for activity because fatty acids are bound in thioester linkage to the sulfhydryl of the prosthetic group.

The protein localises to the cytoplasm. The protein operates within lipid metabolism; fatty acid biosynthesis. Its function is as follows. Carrier of the growing fatty acid chain in fatty acid biosynthesis. This Chlamydia pneumoniae (Chlamydophila pneumoniae) protein is Acyl carrier protein.